The primary structure comprises 343 residues: Glycogen biosynthesis protein GlgD (343 aa).

It belongs to the bacterial/plant glucose-1-phosphate adenylyltransferase family.

Required for the synthesis of glycogen. This is Glycogen biosynthesis protein GlgD (glgD) from Bacillus subtilis (strain 168).